The chain runs to 414 residues: Lactosylceramide alpha-2,3-sialyltransferase (414 aa).

The Cytoplasmic portion of the chain corresponds to 1–65 (MHTEAVGGAA…MRRPSLLIKD (65 aa)). A helical; Signal-anchor for type II membrane protein transmembrane segment spans residues 66–86 (ICKCTLVAFGVWLLYILILNY). The Lumenal segment spans residues 87–414 (TAEECDMKRM…VVEDLSGGIH (328 aa)). A disulfide bridge connects residues C194 and C352. N235, N279, and N389 each carry an N-linked (GlcNAc...) asparagine glycan.

Belongs to the glycosyltransferase 29 family. As to expression, mainly expressed in brain, and then testis, heart and liver, almost all tissues showed some levels of the gene expression.

It localises to the golgi apparatus membrane. The catalysed reaction is a beta-D-Gal-(1-&gt;4)-beta-D-Glc-(1&lt;-&gt;1)-Cer(d18:1(4E)) + CMP-N-acetyl-beta-neuraminate = a ganglioside GM3 (d18:1(4E)) + CMP + H(+). It carries out the reaction ganglioside GA2 (d18:1(4E)/18:0) + CMP-N-acetyl-beta-neuraminate = ganglioside GM2 (d18:1(4E)/18:0) + CMP + H(+). It catalyses the reaction a beta-D-Gal-(1&lt;-&gt;1')-ceramide + CMP-N-acetyl-beta-neuraminate = N-acetyl-alpha-neuraminosyl-(2-&gt;3)-beta-D-galactosyl-(1&lt;-&gt;1')-ceramide + CMP + H(+). The enzyme catalyses ganglioside GA1 (d18:1(4E)/18:0) + CMP-N-acetyl-beta-neuraminate = ganglioside GM1 (d18:1(4E)/18:0) + CMP + H(+). Functionally, (Microbial infection) Gangliosides GD1b and GT1b (derived from GM3) may serve as receptors for some C.botulinum neurotoxins (minimally types BoNT/A, B, C). In terms of biological role, transfers the sialyl group (N-acetyl-alpha-neuraminyl or NeuAc) from CMP-NeuAc to the non-reducing terminal galactose (Gal) of glycosphingolipids forming gangliosides (important molecules involved in the regulation of multiple cellular processes, including cell proliferation and differentiation, apoptosis, embryogenesis, development, and oncogenesis). Mainly involved in the biosynthesis of ganglioside GM3 but can also use different glycolipids as substrate acceptors such as D-galactosylceramide (GalCer), asialo-GM2 (GA2) and asialo-GM1 (GA1), although less preferentially than beta-D-Gal-(1-&gt;4)-beta-D-Glc-(1&lt;-&gt;1)-Cer (LacCer). This is Lactosylceramide alpha-2,3-sialyltransferase (St3gal5) from Mus musculus (Mouse).